Here is a 363-residue protein sequence, read N- to C-terminus: Peptide chain release factor 1 (363 aa).

Position 237 is an N5-methylglutamine (glutamine 237).

This sequence belongs to the prokaryotic/mitochondrial release factor family. In terms of processing, methylated by PrmC. Methylation increases the termination efficiency of RF1.

The protein localises to the cytoplasm. Functionally, peptide chain release factor 1 directs the termination of translation in response to the peptide chain termination codons UAG and UAA. The sequence is that of Peptide chain release factor 1 from Hydrogenovibrio crunogenus (strain DSM 25203 / XCL-2) (Thiomicrospira crunogena).